Reading from the N-terminus, the 625-residue chain is Mesothelin (625 aa).

Residues 1-35 (MALPTAQPLLGSCGSPICSRSFLLLLLSLGWLPLL) form the signal peptide. A Phosphoserine modification is found at Ser202. Cys304 and Cys328 form a disulfide bridge. Residues Asn390, Asn488, and Asn517 are each glycosylated (N-linked (GlcNAc...) asparagine). Ser600 is lipidated: GPI-anchor amidated serine. A propeptide spans 601-625 (SGAPLLGPGFVFAWIPALLSALRLS) (removed in mature form).

It belongs to the mesothelin family. Interacts with MUC16. Proteolytically cleaved by a furin-like convertase to generate megakaryocyte-potentiating factor (MPF), and the cleaved form of mesothelin. As to expression, specifically expressed in lung. Overexpressed in hereditary renal carcinoma developed by Eker rats.

It localises to the cell membrane. Its subcellular location is the golgi apparatus. It is found in the secreted. In terms of biological role, membrane-anchored forms may play a role in cellular adhesion. Functionally, megakaryocyte-potentiating factor (MPF) may potentiate megakaryocyte colony formation. This chain is Mesothelin (Msln), found in Rattus norvegicus (Rat).